The sequence spans 218 residues: Small ribosomal subunit protein mS34 (218 aa).

The tract at residues 178 to 218 (RQKNGDPSTEEPMLSLERIRTDPWDYPENQEAKKKTKGTAV) is disordered.

The protein belongs to the mitochondrion-specific ribosomal protein mS34 family. As to quaternary structure, component of the mitochondrial ribosome small subunit (28S) which comprises a 12S rRNA and about 30 distinct proteins.

The protein localises to the mitochondrion. In terms of biological role, required for mitochondrial translation, plays a role in maintaining the stability of the small ribosomal subunit and the 12S rRNA that are required for mitoribosome formation. The polypeptide is Small ribosomal subunit protein mS34 (Bos taurus (Bovine)).